Reading from the N-terminus, the 172-residue chain is Putative B3 domain-containing protein At1g05615 (172 aa).

A DNA-binding region (TF-B3) is located at residues 69 to 169; it reads VDEGKIIDFE…NLAMVPLTPT (101 aa).

It is found in the nucleus. This is Putative B3 domain-containing protein At1g05615 from Arabidopsis thaliana (Mouse-ear cress).